Consider the following 427-residue polypeptide: Trigger factor (427 aa).

In terms of domain architecture, PPIase FKBP-type spans 160–240 (GDTLIGDVTK…VKEVKRLELP (81 aa)).

It belongs to the FKBP-type PPIase family. Tig subfamily.

It localises to the cytoplasm. The enzyme catalyses [protein]-peptidylproline (omega=180) = [protein]-peptidylproline (omega=0). Involved in protein export. Acts as a chaperone by maintaining the newly synthesized protein in an open conformation. Functions as a peptidyl-prolyl cis-trans isomerase. This chain is Trigger factor, found in Chlorobaculum parvum (strain DSM 263 / NCIMB 8327) (Chlorobium vibrioforme subsp. thiosulfatophilum).